A 279-amino-acid chain; its full sequence is Phosphatidylglycerol--prolipoprotein diacylglyceryl transferase (279 aa).

A run of 7 helical transmembrane segments spans residues 22 to 42 (SAHW…WSSI), 58 to 78 (ILYF…VIFY), 89 to 109 (FIFK…GSII), 128 to 148 (FLVP…FING), 195 to 215 (ISQL…LNIF), 223 to 243 (GYMS…AEFF), and 256 to 276 (YISL…ILII). Residue Arg141 participates in a 1,2-diacyl-sn-glycero-3-phospho-(1'-sn-glycerol) binding.

It belongs to the Lgt family.

It is found in the cell membrane. The catalysed reaction is L-cysteinyl-[prolipoprotein] + a 1,2-diacyl-sn-glycero-3-phospho-(1'-sn-glycerol) = an S-1,2-diacyl-sn-glyceryl-L-cysteinyl-[prolipoprotein] + sn-glycerol 1-phosphate + H(+). The protein operates within protein modification; lipoprotein biosynthesis (diacylglyceryl transfer). Functionally, catalyzes the transfer of the diacylglyceryl group from phosphatidylglycerol to the sulfhydryl group of the N-terminal cysteine of a prolipoprotein, the first step in the formation of mature lipoproteins. This is Phosphatidylglycerol--prolipoprotein diacylglyceryl transferase from Wigglesworthia glossinidia brevipalpis.